The sequence spans 168 residues: Pathogenesis-related protein 1C (168 aa).

An N-terminal signal peptide occupies residues 1 to 30 (MEFVLFSQMSSFFLVSTLLLFLIISHSCHA). Positions 38–156 (LDAHNTARAD…NGGYIVSCNY (119 aa)) constitute an SCP domain.

Belongs to the CRISP family. Three disulfide bonds are present.

It localises to the vacuole. Its function is as follows. Probably involved in the defense reaction of plants against pathogens. In Nicotiana tabacum (Common tobacco), this protein is Pathogenesis-related protein 1C.